The following is a 425-amino-acid chain: NAC domain-containing protein 10 (425 aa).

The span at 1–10 (MESPDSSSGS) shows a compositional bias: polar residues. Residues 1-34 (MESPDSSSGSAPPRVLRRQQQQPGSAPELPPGFR) are disordered. The segment covering 12-23 (PPRVLRRQQQQP) has biased composition (low complexity). The 172-residue stretch at 29-200 (LPPGFRFHPT…DWVLCRIYKK (172 aa)) folds into the NAC domain. Residues 129 to 206 (VGVKKALVFY…IYKKTNKAGA (78 aa)) mediate DNA binding.

Highest expression in stamens. Expressed in leaves.

It localises to the nucleus. Its function is as follows. Transcription factor of the NAC family associated with male fertility. Involved in anther development, but not in senescence. Reduced expression of NAC5 via RNAi leads to male-sterility. The polypeptide is NAC domain-containing protein 10 (Oryza sativa subsp. japonica (Rice)).